The primary structure comprises 635 residues: 3-dehydroshikimate dehydratase (635 aa).

A divalent metal cation is bound by residues glutamate 134, aspartate 165, glutamine 191, and glutamate 239. VOC domains are found at residues 295 to 414 (GVEF…LVEQ) and 440 to 590 (RIDH…VYTE). Residues histidine 443, histidine 521, and glutamate 599 each coordinate Mg(2+).

Belongs to the bacterial two-domain DSD family. In terms of assembly, homodimer. The cofactor is Co(2+). Ni(2+) is required as a cofactor. Mg(2+) serves as cofactor. It depends on Mn(2+) as a cofactor.

The enzyme catalyses 3-dehydroshikimate = 3,4-dihydroxybenzoate + H2O. The protein operates within aromatic compound metabolism; 3,4-dihydroxybenzoate biosynthesis. Catalyzes the conversion of 3-dehydroshikimate to protocatechuate (3,4-dihydroxybenzoate), a common intermediate of quinate and shikimate degradation pathways. The chain is 3-dehydroshikimate dehydratase from Pseudomonas putida (strain ATCC 47054 / DSM 6125 / CFBP 8728 / NCIMB 11950 / KT2440).